The chain runs to 94 residues: Acylphosphatase (94 aa).

Residues 5–94 enclose the Acylphosphatase-like domain; the sequence is RLTAFVHGHV…PRDVEGFVER (90 aa). Active-site residues include Arg20 and Asn38.

It belongs to the acylphosphatase family.

The catalysed reaction is an acyl phosphate + H2O = a carboxylate + phosphate + H(+). The sequence is that of Acylphosphatase (acyP) from Corynebacterium glutamicum (strain R).